The sequence spans 905 residues: V-type proton ATPase 116 kDa subunit a 1 (905 aa).

Residues 1-424 are Cytoplasmic-facing; sequence MGDYVTPGEE…DAYGIATYRE (424 aa). A helical transmembrane segment spans residues 425 to 443; the sequence is INPAPYTMISFPFLFAVMF. At 444 to 445 the chain is on the lumenal side; the sequence is GD. A helical membrane pass occupies residues 446–462; that stretch reads MGHGAIMLLAALFFILK. At 463 to 477 the chain is on the cytoplasmic side; that stretch reads EKQLEAARIKDEIFQ. The chain crosses the membrane as a helical span at residues 478–507; sequence TFFGGRYVIFLMGAFSIYTGFMYNDVFSKS. The Lumenal segment spans residues 508 to 572; the sequence is INTFGSSWQN…EGNKLSFLNS (65 aa). A helical membrane pass occupies residues 573–592; sequence MKMKMSVLFGIAQMTFGVLL. Residues 593–610 are Cytoplasmic-facing; the sequence is SYQNFIYFKSDLDIKYMF. A helical membrane pass occupies residues 611–631; sequence IPQMIFLSSIFIYLCIQILSK. Residues 632–699 lie on the Lumenal side of the membrane; it reads WLFFGAVGGT…YPGQATIEII (68 aa). The helical transmembrane segment at 700 to 719 threads the bilayer; that stretch reads LVVLALVQVPIMLFAKPYFL. Residues 720–788 are Cytoplasmic-facing; it reads YRRDKQQSRY…DVMVYQAIHT (69 aa). A helical transmembrane segment spans residues 789-813; it reads IEFVLGCVSHTASYLRLWALSLAHA. Topologically, residues 814 to 834 are lumenal; sequence QLSDVLWTMVFRNAFVLDGYT. A helical membrane pass occupies residues 835–873; the sequence is GAIATYILFFIFGSLSVFILVLMEGLSAFLHALRLHWVE. The Cytoplasmic segment spans residues 874-905; sequence FQSKFYGGLGYEFAPFSFEKILAEEREAEENL.

This sequence belongs to the V-ATPase 116 kDa subunit family. As to quaternary structure, V-ATPase is a heteromultimeric enzyme made up of two complexes: the ATP-hydrolytic V1 complex and the proton translocation V0 complex. The V1 complex consists of three catalytic AB heterodimers that form a heterohexamer, three peripheral stalks each consisting of EG heterodimers, one central rotor including subunits D and F, and the regulatory subunits C and H. The proton translocation complex V0 consists of the proton transport subunit a, a ring of proteolipid subunits c9c'', rotary subunit d, subunits e and f, and the accessory subunits vah-19/Ac45 and vah-20/PRR. Interacts with V-type proton ATPase subunit C vha-11. As to expression, ubiquitous expression in embryos. Expressed in gonads, intestine, neurons in the head and motoneurons in the ventral cord of larvae and adults. Expressed in the vulvae and spermathecal uterine valves. Weakly expressed in the pharynx. Specifically expressed in the nervous system.

The protein localises to the membrane. Functionally, subunit of the V0 complex of vacuolar(H+)-ATPase (V-ATPase), a multisubunit enzyme composed of a peripheral complex (V1) that hydrolyzes ATP and a membrane integral complex (V0) that translocates protons. V-ATPase is responsible for acidifying and maintaining the pH of intracellular compartments and in some cell types, is targeted to the plasma membrane, where it is responsible for acidifying the extracellular environment. Required for assembly and activity of the vacuolar ATPase. Regulates the size of gut granules during embryonic development. In neurons, required for necrotic cell death by promoting intracellular acidification. Required for cell death induced by hypoxia. Required for acidification of synaptic vesicles and the release of neurotransmitters from adult neurons. This is V-type proton ATPase 116 kDa subunit a 1 from Caenorhabditis elegans.